Here is a 725-residue protein sequence, read N- to C-terminus: Consortin (725 aa).

Disordered regions lie at residues 1–72 (MDDS…LNNN), 103–124 (GKDK…AKKI), 296–353 (LLVS…SLSV), 375–397 (TQSS…CEDD), and 485–510 (QQPD…ENVL). Residues 1–664 (MDDSDTPTYY…LDQDEVGGGS (664 aa)) are Cytoplasmic-facing. Over residues 63–72 (VSEQDSLNNN) the composition is skewed to polar residues. Residues 109–121 (PGKRSPRSKKGTA) are compositionally biased toward basic residues. Over residues 300–314 (EDPKEGGATTKESES) the composition is skewed to basic and acidic residues. 2 stretches are compositionally biased toward polar residues: residues 343–353 (DVQTDSPSLSV) and 375–388 (TQSS…SGPD). Residues 665 to 685 (CILLVLLCIATVFLSVGGTAL) form a helical membrane-spanning segment. Over 686-725 (YCTFGDMESPVCTDFADNMDFYYTKLLQGVAELKHWIYLS) the chain is Extracellular.

The protein belongs to the CNST family. In terms of assembly, interacts with connexins GJA1/CX43, GJB1/CX32, GJB2/CX26, GJB3/CX31, GJB6/CX30 and GJC1/CX45. Also interacts with GGA1 and GGA2. Does not interact with PANX1.

It is found in the cell membrane. The protein resides in the golgi apparatus. The protein localises to the trans-Golgi network membrane. Its subcellular location is the cytoplasmic vesicle. It localises to the secretory vesicle. Required for targeting of connexins to the plasma membrane. In Homo sapiens (Human), this protein is Consortin (CNST).